Consider the following 223-residue polypeptide: MKLHYVAVLTLAILMFLTWLPASLSCNKALCASDVSKCLIQELCQCRPGEGNCSCCKECMLCLEALWDECCDCVGMCNPRNYSDTPPTSKSTVEELHEPIPSLFRALTEGDTQLNWNIVSFPVAEELSHHENLVSFLETVNQPHHQNVSVPSNNVHAPYSSDKEHMCTVVYFDDCMSIHQCKISCESMGASKYRWFHNACCECIGPECIDYGSKTVKCMNCMF.

Residues 1 to 25 (MKLHYVAVLTLAILMFLTWLPASLS) form the signal peptide. N-linked (GlcNAc...) asparagine glycosylation is found at Asn-52 and Asn-81.

The protein belongs to the twisted gastrulation protein family. As to quaternary structure, interacts with CHRD and BMP4. This interaction enhances CHRD/BMP4 complex formation. Interacts with BMP7.

The protein resides in the secreted. Its function is as follows. May be involved in dorsoventral axis formation. Seems to antagonize BMP signaling by forming ternary complexes with CHRD and BMPs, thereby preventing BMPs from binding to their receptors. In addition to the anti-BMP function, also has pro-BMP activity, partly mediated by cleavage and degradation of CHRD, which releases BMPs from ternary complexes. May be an important modulator of BMP-regulated cartilage development and chondrocyte differentiation. May play a role in thymocyte development. The protein is Twisted gastrulation protein homolog 1 (TWSG1) of Pongo abelii (Sumatran orangutan).